The sequence spans 235 residues: Leucyl/phenylalanyl-tRNA--protein transferase (235 aa).

Belongs to the L/F-transferase family.

The protein resides in the cytoplasm. It catalyses the reaction N-terminal L-lysyl-[protein] + L-leucyl-tRNA(Leu) = N-terminal L-leucyl-L-lysyl-[protein] + tRNA(Leu) + H(+). It carries out the reaction N-terminal L-arginyl-[protein] + L-leucyl-tRNA(Leu) = N-terminal L-leucyl-L-arginyl-[protein] + tRNA(Leu) + H(+). The catalysed reaction is L-phenylalanyl-tRNA(Phe) + an N-terminal L-alpha-aminoacyl-[protein] = an N-terminal L-phenylalanyl-L-alpha-aminoacyl-[protein] + tRNA(Phe). Its function is as follows. Functions in the N-end rule pathway of protein degradation where it conjugates Leu, Phe and, less efficiently, Met from aminoacyl-tRNAs to the N-termini of proteins containing an N-terminal arginine or lysine. The protein is Leucyl/phenylalanyl-tRNA--protein transferase of Magnetococcus marinus (strain ATCC BAA-1437 / JCM 17883 / MC-1).